Reading from the N-terminus, the 997-residue chain is Translation initiation factor IF-2 (997 aa).

The disordered stretch occupies residues 101–409 (ELAAEQAAAR…QHQDRRHEQV (309 aa)). Low complexity-rich tracts occupy residues 116-185 (AEAV…QAEP), 195-208 (AAPA…VEPA), and 244-280 (PSAP…PAAP). Residues 281–292 (DRAREEARRAAE) are compositionally biased toward basic and acidic residues. A compositionally biased stretch (gly residues) spans 385-394 (RAGGKGGRGG). Residues 400 to 409 (QHQDRRHEQV) show a composition bias toward basic and acidic residues. Residues 498 to 665 (PRAPVVTVMG…NVLLQAEILE (168 aa)) enclose the tr-type G domain. The tract at residues 507–514 (GHVDHGKT) is G1. 507 to 514 (GHVDHGKT) contacts GTP. The interval 532–536 (GITQH) is G2. The interval 553-556 (DTPG) is G3. GTP contacts are provided by residues 553–557 (DTPGH) and 607–610 (NKID). The interval 607–610 (NKID) is G4. The G5 stretch occupies residues 643–645 (SAK).

It belongs to the TRAFAC class translation factor GTPase superfamily. Classic translation factor GTPase family. IF-2 subfamily.

It is found in the cytoplasm. Functionally, one of the essential components for the initiation of protein synthesis. Protects formylmethionyl-tRNA from spontaneous hydrolysis and promotes its binding to the 30S ribosomal subunits. Also involved in the hydrolysis of GTP during the formation of the 70S ribosomal complex. The polypeptide is Translation initiation factor IF-2 (Bordetella bronchiseptica (strain ATCC BAA-588 / NCTC 13252 / RB50) (Alcaligenes bronchisepticus)).